Consider the following 255-residue polypeptide: Staphylococcal secretory antigen ssaA1 (255 aa).

A signal peptide spans 1–26 (MKKIVTATIATAGLATIAFAGHDAQA). 3 tandem repeats follow at residues 75 to 78 (YNNY), 88 to 91 (YNNY), and 98 to 101 (YNNY). Positions 75–101 (YNNYNTYSYNNASYNNYYNHSYQYNNY) are 3 X 4 AA repeats of Y-N-N-Y. Positions 134 to 255 (AAPSSNGRSI…NQAGSYNFIH (122 aa)) constitute a Peptidase C51 domain.

The protein localises to the secreted. Not known; immunogenic protein. The polypeptide is Staphylococcal secretory antigen ssaA1 (ssaA1) (Staphylococcus aureus (strain MW2)).